Here is a 788-residue protein sequence, read N- to C-terminus: Bifunctional purine biosynthetic protein ADE1 (788 aa).

A GARS region spans residues 1 to 429; the sequence is MSLRILLVGN…NRKDIAYKAF (429 aa). The 210-residue stretch at 114–323 folds into the ATP-grasp domain; the sequence is KDFMKKHNIP…LAEVMLACVE (210 aa). 140-201 serves as a coordination point for ATP; that stretch reads VKKVGHRVVI…EEFLEGDELS (62 aa). Mg(2+) is bound by residues E291 and N293. Residues 439-752 form an AIRS region; the sequence is ITYAQAGVSI…VVKQEKVAEV (314 aa).

It in the N-terminal section; belongs to the GARS family. In the C-terminal section; belongs to the AIR synthase family. Mg(2+) is required as a cofactor. Mn(2+) serves as cofactor.

The protein resides in the cytoplasm. It localises to the cytosol. The enzyme catalyses 5-phospho-beta-D-ribosylamine + glycine + ATP = N(1)-(5-phospho-beta-D-ribosyl)glycinamide + ADP + phosphate + H(+). It carries out the reaction 2-formamido-N(1)-(5-O-phospho-beta-D-ribosyl)acetamidine + ATP = 5-amino-1-(5-phospho-beta-D-ribosyl)imidazole + ADP + phosphate + H(+). The protein operates within purine metabolism; IMP biosynthesis via de novo pathway; 5-amino-1-(5-phospho-D-ribosyl)imidazole from N(2)-formyl-N(1)-(5-phospho-D-ribosyl)glycinamide: step 2/2. It participates in purine metabolism; IMP biosynthesis via de novo pathway; N(1)-(5-phospho-D-ribosyl)glycinamide from 5-phospho-alpha-D-ribose 1-diphosphate: step 2/2. Catalyzes the second and fifth step in the 'de novo' purine biosynthesis pathway; contains phosphoribosylamine--glycine ligase (GARS) and phosphoribosylformylglycinamidine cyclo-ligase (AIRS) activities. This chain is Bifunctional purine biosynthetic protein ADE1, found in Yarrowia lipolytica (strain CLIB 122 / E 150) (Yeast).